Here is a 1166-residue protein sequence, read N- to C-terminus: Pesticidal crystal protein Cry1Ga (1166 aa).

This sequence belongs to the delta endotoxin family.

Its function is as follows. Promotes colloidosmotic lysis by binding to the midgut epithelial cells of insects. The protein is Pesticidal crystal protein Cry1Ga (cry1Ga) of Bacillus thuringiensis.